An 88-amino-acid polypeptide reads, in one-letter code: Exodeoxyribonuclease 7 small subunit (88 aa).

The disordered stretch occupies residues 68-88 (SDPMHPDDGEPFDPSLVSTSQ).

Belongs to the XseB family. As to quaternary structure, heterooligomer composed of large and small subunits.

It localises to the cytoplasm. The catalysed reaction is Exonucleolytic cleavage in either 5'- to 3'- or 3'- to 5'-direction to yield nucleoside 5'-phosphates.. In terms of biological role, bidirectionally degrades single-stranded DNA into large acid-insoluble oligonucleotides, which are then degraded further into small acid-soluble oligonucleotides. The protein is Exodeoxyribonuclease 7 small subunit of Xylella fastidiosa (strain 9a5c).